The primary structure comprises 225 residues: Late gene expression regulator BDLF4 (225 aa).

The interval 1 to 20 (MSDQGRLSLPRGEGGTDEPN) is disordered.

Belongs to the herpesviridae UL92 family.

Part of the viral pre-initiation complex (vPIC) that is responsible for the expression of vPIC-dependent late genes. vPIC is composed of at least BcRF1 that binds the viral TATT box, BDLF3.5, BDLF4, BFRF2, BGLF3, BGLF4 and BVLF1. The chain is Late gene expression regulator BDLF4 from Homo sapiens (Human).